The sequence spans 180 residues: NAD(P)H-quinone oxidoreductase subunit J (180 aa).

The segment covering 1–16 (MNEETQTSELTNTDQG) has biased composition (polar residues). The interval 1 to 23 (MNEETQTSELTNTDQGPQIEPGP) is disordered.

It belongs to the complex I 30 kDa subunit family. In terms of assembly, NDH-1 can be composed of about 15 different subunits; different subcomplexes with different compositions have been identified which probably have different functions.

It localises to the cellular thylakoid membrane. It carries out the reaction a plastoquinone + NADH + (n+1) H(+)(in) = a plastoquinol + NAD(+) + n H(+)(out). It catalyses the reaction a plastoquinone + NADPH + (n+1) H(+)(in) = a plastoquinol + NADP(+) + n H(+)(out). Its function is as follows. NDH-1 shuttles electrons from an unknown electron donor, via FMN and iron-sulfur (Fe-S) centers, to quinones in the respiratory and/or the photosynthetic chain. The immediate electron acceptor for the enzyme in this species is believed to be plastoquinone. Couples the redox reaction to proton translocation, and thus conserves the redox energy in a proton gradient. Cyanobacterial NDH-1 also plays a role in inorganic carbon-concentration. The sequence is that of NAD(P)H-quinone oxidoreductase subunit J from Prochlorococcus marinus (strain MIT 9211).